An 82-amino-acid chain; its full sequence is Sec-independent protein translocase protein TatA (82 aa).

The chain crosses the membrane as a helical span at residues 2 to 22 (GFGGISLWQLLIVLAIIVLLF). Positions 43–82 (KAMSDEKNTDKEKPEQIQKSEESAPLDSAHTEKNKDNNKV) are disordered. Basic and acidic residues-rich tracts occupy residues 44-64 (AMSDEKNTDKEKPEQIQKSEE) and 71-82 (AHTEKNKDNNKV).

Belongs to the TatA/E family. The Tat system comprises two distinct complexes: a TatABC complex, containing multiple copies of TatA, TatB and TatC subunits, and a separate TatA complex, containing only TatA subunits. Substrates initially bind to the TatABC complex, which probably triggers association of the separate TatA complex to form the active translocon.

Its subcellular location is the cell inner membrane. Its function is as follows. Part of the twin-arginine translocation (Tat) system that transports large folded proteins containing a characteristic twin-arginine motif in their signal peptide across membranes. TatA could form the protein-conducting channel of the Tat system. The protein is Sec-independent protein translocase protein TatA of Pseudoalteromonas translucida (strain TAC 125).